The following is a 375-amino-acid chain: MEGAGETTTSEGHLTSAAAFVEGGIQDACDDACSICLESFCESDPSTLTSCKHEYHLQCILEWCQRSSQCPMCWQSISLKDPTSQELLEAVEQERNFRFNPTRNATIFRHPTLGDFELQHLPVGVDNAEIEERIIQHLAAAAAMGRARHGVRREGHRSRSSSQGHQQFMVFSSQPNASSPPPHPPMPSSPSQRDESDTVSNLPHNALGEGSHQSNTQPPTSSHPRQVSPSASDSNSRPLNQSSPSEQDRAGPSELQSFSESLKSRLNAVSTRYKESISKNTRNWKDRLFSRNTSMADLGSEVKREVSAGIATVSRMMERLETRENSRPSTASVSDVSENHTPETNNEHNRAAAGDEHSVNERGVKETCATGSGSS.

Residues 33-74 (CSICLESFCESDPSTLTSCKHEYHLQCILEWCQRSSQCPMCW) form an RING-type; atypical zinc finger. Residues 146–159 (RARHGVRREGHRSR) show a composition bias toward basic residues. 3 disordered regions span residues 146 to 165 (RARHGVRREGHRSRSSSQGH), 172 to 262 (SSQP…SESL), and 318 to 375 (ERLE…SGSS). Pro residues predominate over residues 178–188 (SSPPPHPPMPS). Composition is skewed to polar residues over residues 211 to 245 (SHQSNTQPPTSSHPRQVSPSASDSNSRPLNQSSPS) and 327 to 336 (RPSTASVSDV). The segment covering 337-365 (SENHTPETNNEHNRAAAGDEHSVNERGVK) has biased composition (basic and acidic residues).

It catalyses the reaction S-ubiquitinyl-[E2 ubiquitin-conjugating enzyme]-L-cysteine + [acceptor protein]-L-lysine = [E2 ubiquitin-conjugating enzyme]-L-cysteine + N(6)-ubiquitinyl-[acceptor protein]-L-lysine.. It participates in protein modification; protein ubiquitination. Functionally, E3 ubiquitin-protein ligase involved in the positive regulation of the gametogenesis progression. Required for the degradation of KRP6, a cyclin-dependent kinase inhibitor which accumulates during meiosis and blocks the progression of subsequent mitoses during gametophytes development. Functions in association with RHF1A. This chain is E3 ubiquitin-protein ligase RHF2A, found in Arabidopsis thaliana (Mouse-ear cress).